The following is a 518-amino-acid chain: Prosaposin (518 aa).

Residues 1–17 form the signal peptide; that stretch reads MARRLLTLLGLLAAAVA. The propeptide occupies 18-60; that stretch reads SPVLWQKDCAKGPEVWCQSLRTASQCGAVKHCQQNVWSKPAVN. Residues 19-59 form the Saposin A-type 1 domain; it reads PVLWQKDCAKGPEVWCQSLRTASQCGAVKHCQQNVWSKPAV. Saposin B-type domains lie at 60–143, 193–277, 307–388, and 399–480; these read NSIP…QSLQ, TEDV…PSVK, TFSV…AANK, and AGGF…GAAK. Disulfide bonds link Cys-64-Cys-139, Cys-67-Cys-133, and Cys-95-Cys-107. N-linked (GlcNAc...) asparagine glycosylation is present at Asn-81. The propeptide occupies 144–193; that stretch reads KHLAAMKLQKQLQSNKIPELDFSELTSPFMANVPLLLYPQDKPKQKSKAT. Cystine bridges form between Cys-197/Cys-273, Cys-200/Cys-267, and Cys-229/Cys-240. Asn-214 carries an N-linked (GlcNAc...) asparagine glycan. The propeptide occupies 277 to 306; sequence KSVPLQTLVPAQVVHEVKMETVEKATVQEK. 3 cysteine pairs are disulfide-bonded: Cys-311–Cys-384, Cys-314–Cys-378, and Cys-342–Cys-353. Asn-328 carries an N-linked (GlcNAc...) asparagine glycan. The propeptide occupies 388–398; it reads KPPQQPVVVKP. Cystine bridges form between Cys-403-Cys-476, Cys-406-Cys-470, and Cys-434-Cys-445. An N-linked (GlcNAc...) asparagine glycan is attached at Asn-420. A propeptide spanning residues 480 to 518 is cleaved from the precursor; the sequence is KKPLLGEDACVWGPGYWCKNMETAAQCNAVDHCRRHVWN. A Saposin A-type 2 domain is found at 482-518; the sequence is PLLGEDACVWGPGYWCKNMETAAQCNAVDHCRRHVWN.

As to quaternary structure, saposin-B is a homodimer. This precursor is proteolytically processed to 4 small peptides, which are similar to each other and are sphingolipid hydrolase activator proteins.

It is found in the lysosome. The protein resides in the secreted. The lysosomal degradation of sphingolipids takes place by the sequential action of specific hydrolases. Some of these enzymes require specific low-molecular mass, non-enzymatic proteins: the sphingolipids activator proteins (coproteins). Its function is as follows. Saposin-A and saposin-C stimulate the hydrolysis of glucosylceramide by beta-glucosylceramidase (EC 3.2.1.45) and galactosylceramide by beta-galactosylceramidase (EC 3.2.1.46). Saposin-C apparently acts by combining with the enzyme and acidic lipid to form an activated complex, rather than by solubilizing the substrate. In terms of biological role, saposin-B stimulates the hydrolysis of galacto-cerebroside sulfate by arylsulfatase A (EC 3.1.6.8), GM1 gangliosides by beta-galactosidase (EC 3.2.1.23) and globotriaosylceramide by alpha-galactosidase A (EC 3.2.1.22). Saposin-B forms a solubilizing complex with the substrates of the sphingolipid hydrolases. Functionally, saposin-D is a specific sphingomyelin phosphodiesterase activator (EC 3.1.4.12). The sequence is that of Prosaposin (PSAP) from Gallus gallus (Chicken).